The primary structure comprises 160 residues: Snaclec subunit A (160 aa).

The N-terminal stretch at 1-23 is a signal peptide; the sequence is MGRFILVNLGLLVVAFSLRGSEA. 3 cysteine pairs are disulfide-bonded: Cys25–Cys36, Cys53–Cys150, and Cys125–Cys142. A C-type lectin domain is found at 32 to 151; sequence YDKYCYKVFD…CDFTLPFICK (120 aa).

Belongs to the snaclec family. Heterodimer of subunits A and B; disulfide-linked. As to expression, expressed by the venom gland.

It localises to the secreted. Its function is as follows. Interferes with one step of hemostasis (modulation of platelet aggregation, or coagulation cascade, for example). This is Snaclec subunit A from Philodryas olfersii (Green snake).